We begin with the raw amino-acid sequence, 495 residues long: Ubiquinone biosynthesis monooxygenase COQ6, mitochondrial (495 aa).

This sequence belongs to the UbiH/COQ6 family. As to quaternary structure, component of a multi-subunit COQ enzyme complex. It depends on FAD as a cofactor.

Its subcellular location is the mitochondrion inner membrane. The enzyme catalyses a 4-hydroxy-3-(all-trans-polyprenyl)benzoate + 2 reduced [2Fe-2S]-[ferredoxin] + O2 + 2 H(+) = a 3,4-dihydroxy-5-(all-trans-polyprenyl)benzoate + 2 oxidized [2Fe-2S]-[ferredoxin] + H2O. It carries out the reaction a 2-methoxy-6-(all-trans-polyprenyl)phenol + 2 reduced [2Fe-2S]-[ferredoxin] + O2 + 2 H(+) = a 2-methoxy-6-(all-trans-polyprenyl)benzene-1,4-diol + 2 oxidized [2Fe-2S]-[ferredoxin] + H2O. It participates in cofactor biosynthesis; ubiquinone biosynthesis. FAD-dependent monooxygenase required for two non-consecutive steps during ubiquinone biosynthesis. Required for the C5-ring hydroxylation during ubiquinone biosynthesis by catalyzing the hydroxylation of 4-hydroxy-3-(all-trans-polyprenyl)benzoic acid to 3,4-dihydroxy-5-(all-trans-polyprenyl)benzoic acid. Also acts downstream of coq4, for the C1-hydroxylation during ubiquinone biosynthesis by catalyzing the hydroxylation of 2-methoxy-6-(all-trans-polyprenyl)phenol to 2-methoxy-6-(all-trans-polyprenyl)benzene-1,4-diol. The electrons required for the hydroxylation reaction are funneled indirectly to coq6 from NADPH via a ferredoxin/ferredoxin reductase system. The chain is Ubiquinone biosynthesis monooxygenase COQ6, mitochondrial from Dictyostelium discoideum (Social amoeba).